We begin with the raw amino-acid sequence, 398 residues long: Acetylornithine aminotransferase (398 aa).

Phe-129 is a pyridoxal 5'-phosphate binding site. Arg-132 contributes to the N(2)-acetyl-L-ornithine binding site. Position 214–217 (214–217) interacts with pyridoxal 5'-phosphate; it reads DEVQ. An N6-(pyridoxal phosphate)lysine modification is found at Lys-243. Residue Ser-271 coordinates N(2)-acetyl-L-ornithine. Thr-272 contacts pyridoxal 5'-phosphate.

It belongs to the class-III pyridoxal-phosphate-dependent aminotransferase family. ArgD subfamily. In terms of assembly, homodimer. Requires pyridoxal 5'-phosphate as cofactor.

The protein resides in the cytoplasm. The catalysed reaction is N(2)-acetyl-L-ornithine + 2-oxoglutarate = N-acetyl-L-glutamate 5-semialdehyde + L-glutamate. It participates in amino-acid biosynthesis; L-arginine biosynthesis; N(2)-acetyl-L-ornithine from L-glutamate: step 4/4. The protein is Acetylornithine aminotransferase of Neisseria meningitidis serogroup B (strain ATCC BAA-335 / MC58).